The following is a 1356-amino-acid chain: Serine/threonine-protein kinase PSK1 (1356 aa).

Serine 10 is subject to Phosphoserine. The disordered stretch occupies residues 20–115 (KHAITHKGTS…SVDSTVSSPL (96 aa)). 2 stretches are compositionally biased toward polar residues: residues 26–37 (KGTSSSVASLQT) and 54–64 (YDTSLSDVSTP). A compositionally biased stretch (low complexity) spans 99 to 115 (LPSTASSSVDSTVSSPL). 5 positions are modified to phosphoserine: serine 192, serine 202, serine 255, serine 286, and serine 327. The PAS 1 domain occupies 450-518 (RTFTSTKNSA…VLHKLLSTEG (69 aa)). A compositionally biased stretch (low complexity) spans 592-608 (PTLSSSSTLSLPKMASS). Disordered regions lie at residues 592–612 (PTLS…PTGS) and 627–660 (YTKP…PVRS). One can recognise a PAS 2 domain in the interval 738–807 (LKLKIHSLPY…FINDKYPALD (70 aa)). Serine 926 is modified (phosphoserine). The segment at 948-972 (DSRAHSQSTLSEQEQVPLENDKDSG) is disordered. The segment covering 952–961 (HSQSTLSEQE) has biased composition (polar residues). Phosphoserine is present on residues serine 1018, serine 1023, serine 1035, and serine 1055. Residues 1021–1032 (TESLADSKSSGK) are compositionally biased toward polar residues. Residues 1021–1066 (TESLADSKSSGKGLSPLEEEKLIDENATENGLAGSPKDEDGIIMTN) form a disordered region. Threonine 1079 is subject to Phosphothreonine. Positions 1096-1354 (FVSLQKMGEG…IDDINNDKWL (259 aa)) constitute a Protein kinase domain. ATP contacts are provided by residues 1102-1110 (MGEGAYGKV) and lysine 1125. Catalysis depends on aspartate 1230, which acts as the Proton acceptor.

It belongs to the protein kinase superfamily. Ser/Thr protein kinase family.

It localises to the cytoplasm. It carries out the reaction L-seryl-[protein] + ATP = O-phospho-L-seryl-[protein] + ADP + H(+). It catalyses the reaction L-threonyl-[protein] + ATP = O-phospho-L-threonyl-[protein] + ADP + H(+). Functionally, serine/threonine-protein kinase involved in the control of sugar metabolism and translation. Phosphorylates UGP1, which is required for normal glycogen and beta-(1,6)-glucan synthesis. This phosphorylation shifts glucose partitioning toward cell wall glucan synthesis at the expense of glycogen synthesis. The polypeptide is Serine/threonine-protein kinase PSK1 (PSK1) (Saccharomyces cerevisiae (strain ATCC 204508 / S288c) (Baker's yeast)).